A 329-amino-acid chain; its full sequence is Deoxynucleotidyltransferase terminal-interacting protein 1 (329 aa).

The disordered stretch occupies residues 1 to 27 (MGATGDVEQPRGPGGAERGGPELGDAG). A compositionally biased stretch (gly residues) spans 12 to 22 (GPGGAERGGPE). The tract at residues 56–147 (MTTSFTDPAI…RLTHELPGIK (92 aa)) is important for dimerization. The segment at residues 159-173 (RGSPIPKKRKGRPPG) is a DNA-binding region (a.T hook). Ser161 bears the Phosphoserine mark. A Nuclear localization signal motif is present at residues 164 to 170 (PKKRKGR). The important for DNA and nucleosome binding stretch occupies residues 197–316 (REGPKWDPAR…MRKYMETLRT (120 aa)). Positions 216 to 237 (GSRANKALGMGGTRGRIYIKHP) form a DNA-binding region, H-T-H motif.

As to quaternary structure, monomer and homodimer. A minor proportion may form homotrimers. Interacts with ZNF541. Interacts with the terminal deoxynucleotidyltransferase DNTT. Interacts with TRERF1. Identified in a histone deacetylase complex that contains DNTTIP1, HDAC1 and MIDEAS; this complex assembles into a tetramer that contains four copies of each protein chain. Component of a histone deacetylase complex containing DNTTIP1, ZNF541, HDAC1 and HDAC2. Identified in a complex with KCTD19, HDAC1, HDAC2 and ZNF541.

The protein localises to the nucleus. Its function is as follows. Increases DNTT terminal deoxynucleotidyltransferase activity (in vitro). Also acts as a transcriptional regulator, binding to the consensus sequence 5'-GNTGCATG-3' following an AT-tract. Associates with RAB20 promoter and positively regulates its transcription. Binds DNA and nucleosomes; may recruit HDAC1 complexes to nucleosomes or naked DNA. The chain is Deoxynucleotidyltransferase terminal-interacting protein 1 (DNTTIP1) from Bos taurus (Bovine).